The following is a 185-amino-acid chain: Threonylcarbamoyl-AMP synthase (185 aa).

One can recognise a YrdC-like domain in the interval 4 to 185 (SWRVQQAARE…LATGNIVRPA (182 aa)).

The protein belongs to the SUA5 family. TsaC subfamily.

The protein localises to the cytoplasm. The enzyme catalyses L-threonine + hydrogencarbonate + ATP = L-threonylcarbamoyladenylate + diphosphate + H2O. In terms of biological role, required for the formation of a threonylcarbamoyl group on adenosine at position 37 (t(6)A37) in tRNAs that read codons beginning with adenine. Catalyzes the conversion of L-threonine, HCO(3)(-)/CO(2) and ATP to give threonylcarbamoyl-AMP (TC-AMP) as the acyladenylate intermediate, with the release of diphosphate. The sequence is that of Threonylcarbamoyl-AMP synthase from Pseudomonas fluorescens (strain Pf0-1).